Consider the following 249-residue polypeptide: Triosephosphate isomerase (249 aa).

9–11 is a binding site for substrate; sequence NWK. The active-site Electrophile is histidine 95. Catalysis depends on glutamate 166, which acts as the Proton acceptor. Substrate-binding positions include glycine 172, serine 211, and 232-233; that span reads GG.

This sequence belongs to the triosephosphate isomerase family. In terms of assembly, homodimer.

It localises to the cytoplasm. It catalyses the reaction D-glyceraldehyde 3-phosphate = dihydroxyacetone phosphate. The protein operates within carbohydrate biosynthesis; gluconeogenesis. It functions in the pathway carbohydrate degradation; glycolysis; D-glyceraldehyde 3-phosphate from glycerone phosphate: step 1/1. Its function is as follows. Involved in the gluconeogenesis. Catalyzes stereospecifically the conversion of dihydroxyacetone phosphate (DHAP) to D-glyceraldehyde-3-phosphate (G3P). The chain is Triosephosphate isomerase from Legionella pneumophila (strain Paris).